A 145-amino-acid polypeptide reads, in one-letter code: Large ribosomal subunit protein uL11 (145 aa).

Belongs to the universal ribosomal protein uL11 family. In terms of assembly, part of the ribosomal stalk of the 50S ribosomal subunit. Interacts with L10 and the large rRNA to form the base of the stalk. L10 forms an elongated spine to which L12 dimers bind in a sequential fashion forming a multimeric L10(L12)X complex. One or more lysine residues are methylated.

Forms part of the ribosomal stalk which helps the ribosome interact with GTP-bound translation factors. This chain is Large ribosomal subunit protein uL11, found in Rickettsia africae (strain ESF-5).